Consider the following 279-residue polypeptide: Urease accessory protein UreD (279 aa).

Belongs to the UreD family. UreD, UreF and UreG form a complex that acts as a GTP-hydrolysis-dependent molecular chaperone, activating the urease apoprotein by helping to assemble the nickel containing metallocenter of UreC. The UreE protein probably delivers the nickel.

The protein localises to the cytoplasm. In terms of biological role, required for maturation of urease via the functional incorporation of the urease nickel metallocenter. The sequence is that of Urease accessory protein UreD from Nostoc punctiforme (strain ATCC 29133 / PCC 73102).